The following is a 271-amino-acid chain: MQQHIIESTHVKPTINPKEEIRQRIDFLKAYVKRAGAKGLVLGISGGQDSSLAGKLCQLAMEELREETGDEYTFYAIRLPYGEQHDEHDAQLALEFIRPDKSFTVNIKPAVDASVEAFHRATGLELSDFHKGNTKARERMKAQYDIAATFGALVVGTDHAAEYVTGFYTKHGDGACDLTPLTGLNKRQGKALLHELEAHERVIYKVPTADLEDGRPGLPDEVALGMTYDQLDDYLEGKTIDPTIAERIETIFKRSRHKHHMPASLYDEWWQ.

43–50 (GISGGQDS) contacts ATP. Aspartate 49 is a binding site for Mg(2+). Arginine 137 is a binding site for deamido-NAD(+). Threonine 157 provides a ligand contact to ATP. Glutamate 162 is a Mg(2+) binding site. Deamido-NAD(+) contacts are provided by lysine 170 and aspartate 177. Residues lysine 186 and threonine 208 each contribute to the ATP site. 257–258 (HK) lines the deamido-NAD(+) pocket.

Belongs to the NAD synthetase family. As to quaternary structure, homodimer.

The catalysed reaction is deamido-NAD(+) + NH4(+) + ATP = AMP + diphosphate + NAD(+) + H(+). It functions in the pathway cofactor biosynthesis; NAD(+) biosynthesis; NAD(+) from deamido-NAD(+) (ammonia route): step 1/1. Functionally, catalyzes the ATP-dependent amidation of deamido-NAD to form NAD. Uses ammonia as a nitrogen source. This Exiguobacterium sp. (strain ATCC BAA-1283 / AT1b) protein is NH(3)-dependent NAD(+) synthetase.